Reading from the N-terminus, the 755-residue chain is von Willebrand factor A domain-containing protein 2 (755 aa).

An N-terminal signal peptide occupies residues 1–23; sequence MPPFLLLEAVCVFLFSRVPPSLP. Residues 51 to 222 enclose the VWFA 1 domain; it reads DIMFLLDGSN…DATNGLFSTL (172 aa). The N-linked (GlcNAc...) asparagine glycan is linked to asparagine 147. In terms of domain architecture, EGF-like 1 spans 296 to 333; sequence PGPCDSQPCQNGGTCVPEGLDGYQCLCPLAFGGEANCA. Intrachain disulfides connect cysteine 299–cysteine 310, cysteine 304–cysteine 320, and cysteine 322–cysteine 332. VWFA domains are found at residues 343–517 and 531–705; these read DLLF…QGKL and DLVF…IEWL. In terms of domain architecture, EGF-like 2 spans 712-748; the sequence is PVNLCKPSPCMNEGSCVLQNGSYRCKCRDGWEGPHCE. Intrachain disulfides connect cysteine 716–cysteine 727, cysteine 721–cysteine 736, and cysteine 738–cysteine 747.

Forms monomers and multimers. Post-translationally, a 55 kDa form is produced by proteolytic cleavage. As to expression, expression is generally absent in normal colon and other normal body tissues, but it is induced an average of 78-fold in Stage II, III, and IV colon cancers, as well as in colon adenomas and colon cancer cell lines.

Its subcellular location is the secreted. The chain is von Willebrand factor A domain-containing protein 2 (VWA2) from Homo sapiens (Human).